A 620-amino-acid chain; its full sequence is Glutathione-regulated potassium-efflux system protein KefC (620 aa).

The next 12 helical transmembrane spans lie at 4–24 (HTLI…PIAV), 26–46 (LGLG…PWGL), 54–74 (SILH…GLEL), 90–110 (GALQ…LLGL), 114–134 (VAEL…MQAM), 149–169 (FAVL…IPLL), 178–198 (MGAF…VVLL), 218–238 (VFSA…EEVG), 270–290 (GLLL…GTLI), 294–314 (LRIV…LWLI), 327–347 (WFAV…GAAQ), and 359–379 (SLTL…VILN). Positions 399-518 (QPRVIIAGFG…AGVEKPERET (120 aa)) constitute an RCK N-terminal domain. The disordered stretch occupies residues 597–620 (GWQGTEEGKHTGNMADEPETKPSS).

It belongs to the monovalent cation:proton antiporter 2 (CPA2) transporter (TC 2.A.37) family. KefC subfamily. In terms of assembly, homodimer. Interacts with the regulatory subunit KefF.

It localises to the cell inner membrane. In terms of biological role, pore-forming subunit of a potassium efflux system that confers protection against electrophiles. Catalyzes K(+)/H(+) antiport. The protein is Glutathione-regulated potassium-efflux system protein KefC of Escherichia coli O45:K1 (strain S88 / ExPEC).